Here is a 365-residue protein sequence, read N- to C-terminus: Chorismate synthase (365 aa).

Arg-47 is an NADP(+) binding site. FMN is bound by residues 124–126 (RAS), Gly-287, 302–306 (KPTAT), and Arg-328.

It belongs to the chorismate synthase family. Homotetramer. The cofactor is FMNH2.

The catalysed reaction is 5-O-(1-carboxyvinyl)-3-phosphoshikimate = chorismate + phosphate. It participates in metabolic intermediate biosynthesis; chorismate biosynthesis; chorismate from D-erythrose 4-phosphate and phosphoenolpyruvate: step 7/7. Functionally, catalyzes the anti-1,4-elimination of the C-3 phosphate and the C-6 proR hydrogen from 5-enolpyruvylshikimate-3-phosphate (EPSP) to yield chorismate, which is the branch point compound that serves as the starting substrate for the three terminal pathways of aromatic amino acid biosynthesis. This reaction introduces a second double bond into the aromatic ring system. In Prochlorococcus marinus (strain AS9601), this protein is Chorismate synthase.